The chain runs to 457 residues: tRNA modification GTPase MnmE (457 aa).

(6S)-5-formyl-5,6,7,8-tetrahydrofolate is bound by residues Arg-23, Glu-86, and Arg-125. Residues 221 to 377 (GVSVLIAGKP…LREAVFETFI (157 aa)) form the TrmE-type G domain. Asn-231 lines the K(+) pocket. Residues 231–236 (NVGKSS), 250–256 (TSVPGTT), and 275–278 (DTAG) contribute to the GTP site. Ser-235 is a binding site for Mg(2+). 3 residues coordinate K(+): Thr-250, Val-252, and Thr-255. A Mg(2+)-binding site is contributed by Thr-256. A (6S)-5-formyl-5,6,7,8-tetrahydrofolate-binding site is contributed by Lys-457.

This sequence belongs to the TRAFAC class TrmE-Era-EngA-EngB-Septin-like GTPase superfamily. TrmE GTPase family. In terms of assembly, homodimer. Heterotetramer of two MnmE and two MnmG subunits. K(+) serves as cofactor.

The protein resides in the cytoplasm. Functionally, exhibits a very high intrinsic GTPase hydrolysis rate. Involved in the addition of a carboxymethylaminomethyl (cmnm) group at the wobble position (U34) of certain tRNAs, forming tRNA-cmnm(5)s(2)U34. The sequence is that of tRNA modification GTPase MnmE from Geobacter metallireducens (strain ATCC 53774 / DSM 7210 / GS-15).